The chain runs to 512 residues: Maturase K (512 aa).

It belongs to the intron maturase 2 family. MatK subfamily.

It localises to the plastid. The protein resides in the chloroplast. Its function is as follows. Usually encoded in the trnK tRNA gene intron. Probably assists in splicing its own and other chloroplast group II introns. This chain is Maturase K, found in Amorphophallus abyssinicus (Black arum).